The sequence spans 208 residues: Imidazole glycerol phosphate synthase subunit HisH (208 aa).

Positions Met-1–Ser-206 constitute a Glutamine amidotransferase type-1 domain. The active-site Nucleophile is the Cys-79. Residues His-181 and Glu-183 contribute to the active site.

Heterodimer of HisH and HisF.

The protein resides in the cytoplasm. It carries out the reaction 5-[(5-phospho-1-deoxy-D-ribulos-1-ylimino)methylamino]-1-(5-phospho-beta-D-ribosyl)imidazole-4-carboxamide + L-glutamine = D-erythro-1-(imidazol-4-yl)glycerol 3-phosphate + 5-amino-1-(5-phospho-beta-D-ribosyl)imidazole-4-carboxamide + L-glutamate + H(+). The catalysed reaction is L-glutamine + H2O = L-glutamate + NH4(+). Its pathway is amino-acid biosynthesis; L-histidine biosynthesis; L-histidine from 5-phospho-alpha-D-ribose 1-diphosphate: step 5/9. Its function is as follows. IGPS catalyzes the conversion of PRFAR and glutamine to IGP, AICAR and glutamate. The HisH subunit catalyzes the hydrolysis of glutamine to glutamate and ammonia as part of the synthesis of IGP and AICAR. The resulting ammonia molecule is channeled to the active site of HisF. The chain is Imidazole glycerol phosphate synthase subunit HisH from Listeria innocua serovar 6a (strain ATCC BAA-680 / CLIP 11262).